A 308-amino-acid polypeptide reads, in one-letter code: D-alanine--D-alanine ligase (308 aa).

Residues 104 to 301 (KQIWQGSDLP…FDELCVAILE (198 aa)) form the ATP-grasp domain. 130–185 (IAELGLPVIIKPVHEGSSVGMSKVEKAEDFAAAIEKATQHDAVVMAEKWITGREFT) is an ATP binding site. Residues Asp255, Glu268, and Asn270 each contribute to the Mg(2+) site.

The protein belongs to the D-alanine--D-alanine ligase family. Requires Mg(2+) as cofactor. Mn(2+) is required as a cofactor.

The protein localises to the cytoplasm. The catalysed reaction is 2 D-alanine + ATP = D-alanyl-D-alanine + ADP + phosphate + H(+). Its pathway is cell wall biogenesis; peptidoglycan biosynthesis. Its function is as follows. Cell wall formation. The polypeptide is D-alanine--D-alanine ligase (Acinetobacter baumannii (strain SDF)).